A 309-amino-acid polypeptide reads, in one-letter code: Homoserine O-succinyltransferase (309 aa).

Cys-142 acts as the Acyl-thioester intermediate in catalysis. Substrate is bound by residues Lys-163 and Ser-192. His-235 serves as the catalytic Proton acceptor. The active site involves Glu-237. Arg-249 contacts substrate.

Belongs to the MetA family. In terms of assembly, homodimer.

The protein resides in the cytoplasm. The catalysed reaction is L-homoserine + succinyl-CoA = O-succinyl-L-homoserine + CoA. Its pathway is amino-acid biosynthesis; L-methionine biosynthesis via de novo pathway; O-succinyl-L-homoserine from L-homoserine: step 1/1. Its function is as follows. Transfers a succinyl group from succinyl-CoA to L-homoserine, forming succinyl-L-homoserine. This is Homoserine O-succinyltransferase from Escherichia coli (strain ATCC 8739 / DSM 1576 / NBRC 3972 / NCIMB 8545 / WDCM 00012 / Crooks).